The following is a 227-amino-acid chain: Iron-regulated surface determinant protein C (227 aa).

The signal sequence occupies residues 1 to 28 (MKNILKVFNTTILALIIIIATFSNSANA). An NEAT domain is found at 29–150 (ADSGTLNYEV…KFNGPTDVAG (122 aa)). Heme-binding residues include serine 47, isoleucine 48, tyrosine 132, and tyrosine 136. The disordered stretch occupies residues 149 to 191 (AGANAPGKDDKNSASGSDKGSDGTTTGQSESNSSNKDKVENPQ). The segment covering 161-175 (SASGSDKGSDGTTTG) has biased composition (low complexity). Positions 189–193 (NPQTN) match the NPQTN sorting signal motif. Threonine 192 carries the post-translational modification Pentaglycyl murein peptidoglycan amidated threonine. Positions 193 to 227 (NAGTPAYIYAIPVASLALLIAITLFVRKKSKGNVE) are cleaved as a propeptide — removed by sortase B.

Belongs to the IsdC family. Monomer. Interacts with IsdA.

It is found in the secreted. It localises to the cell wall. In terms of biological role, involved in heme (porphyrin) scavenging. Binds hemoglobin and almost exclusively free-base protoporphyrin IX. Probably has a role as the central conduit of the isd heme uptake system, i.e. mediates the transfer of the iron-containing nutrient from IsdABH to the membrane translocation system IsdDEF. Hemin-free IsdC (apo-IsdC) acquires hemin from hemin-containing IsdA (holo-IsdA) probably through the activated holo-IsdA-apo-IsdC complex and due to the higher affinity of apo-IsdC for the cofactor. The reaction is reversible. In Staphylococcus aureus (strain Mu3 / ATCC 700698), this protein is Iron-regulated surface determinant protein C (isdC).